Here is a 415-residue protein sequence, read N- to C-terminus: Calcium/calmodulin-dependent serine/threonine-protein kinase (415 aa).

Residues 12 to 308 form the Protein kinase domain; it reads YEISEILGRG…AQELLDHPWV (297 aa). ATP is bound by residues 18 to 26 and lysine 46; that span reads LGRGGFSVV. The active-site Proton acceptor is aspartate 173. The calmodulin-binding stretch occupies residues 318–328; sequence MDAEIVSRLQS.

It belongs to the protein kinase superfamily. CAMK Ser/Thr protein kinase family. CaMK subfamily.

The enzyme catalyses L-seryl-[protein] + ATP = O-phospho-L-seryl-[protein] + ADP + H(+). It carries out the reaction L-threonyl-[protein] + ATP = O-phospho-L-threonyl-[protein] + ADP + H(+). Functionally, may be involved in signal transduction processes. This Malus domestica (Apple) protein is Calcium/calmodulin-dependent serine/threonine-protein kinase.